The chain runs to 120 residues: MEWKVVDTVISPSTGVSFSCIHSLKNLRLTLWYQADVYMPPGSIIIPFNKGVLINDKLYPVTVYNVTRFNPVLWKSLKENSHCPGNCNPKSEACSYPFECLVSVCPFGLTRNIQIDNKKV.

Belongs to the IraM/RssC family.

It is found in the cytoplasm. Its function is as follows. Involved in the stabilization of the sigma stress factor RpoS. In Salmonella typhimurium (strain LT2 / SGSC1412 / ATCC 700720), this protein is Anti-adapter protein IraM.